We begin with the raw amino-acid sequence, 167 residues long: NAD(P)H-quinone oxidoreductase subunit I, chloroplastic (167 aa).

4Fe-4S ferredoxin-type domains lie at 55-84 (GRIH…VDWK) and 95-124 (LNYS…MTEE). [4Fe-4S] cluster contacts are provided by Cys-64, Cys-67, Cys-70, Cys-74, Cys-104, Cys-107, Cys-110, and Cys-114.

The protein belongs to the complex I 23 kDa subunit family. As to quaternary structure, NDH is composed of at least 16 different subunits, 5 of which are encoded in the nucleus. [4Fe-4S] cluster serves as cofactor.

It is found in the plastid. The protein resides in the chloroplast thylakoid membrane. The catalysed reaction is a plastoquinone + NADH + (n+1) H(+)(in) = a plastoquinol + NAD(+) + n H(+)(out). It catalyses the reaction a plastoquinone + NADPH + (n+1) H(+)(in) = a plastoquinol + NADP(+) + n H(+)(out). In terms of biological role, NDH shuttles electrons from NAD(P)H:plastoquinone, via FMN and iron-sulfur (Fe-S) centers, to quinones in the photosynthetic chain and possibly in a chloroplast respiratory chain. The immediate electron acceptor for the enzyme in this species is believed to be plastoquinone. Couples the redox reaction to proton translocation, and thus conserves the redox energy in a proton gradient. The chain is NAD(P)H-quinone oxidoreductase subunit I, chloroplastic from Lobularia maritima (Sweet alyssum).